The primary structure comprises 544 residues: Esterase P (544 aa).

The first 19 residues, 1 to 19, serve as a signal peptide directing secretion; it reads MSIFKRLLCLTLLWIAALE. Residue asparagine 75 is glycosylated (N-linked (GlcNAc...) asparagine). Cysteine 83 and cysteine 102 are disulfide-bonded. Asparagine 114 is a glycosylation site (N-linked (GlcNAc...) asparagine). The active-site Acyl-ester intermediate is the serine 206. The cysteines at positions 258 and 270 are disulfide-linked. N-linked (GlcNAc...) asparagine glycans are attached at residues asparagine 262 and asparagine 456. The active-site Charge relay system is the histidine 466. Cysteine 514 and cysteine 535 are joined by a disulfide.

Belongs to the type-B carboxylesterase/lipase family. In terms of assembly, monomer.

It is found in the secreted. It catalyses the reaction a carboxylic ester + H2O = an alcohol + a carboxylate + H(+). This is Esterase P (Est-P) from Drosophila melanogaster (Fruit fly).